A 156-amino-acid chain; its full sequence is 6,7-dimethyl-8-ribityllumazine synthase (156 aa).

Residues Phe22, 56–58 (AFE), and 80–82 (AVV) each bind 5-amino-6-(D-ribitylamino)uracil. Residue 85–86 (ET) participates in (2S)-2-hydroxy-3-oxobutyl phosphate binding. The active-site Proton donor is His88. Phe113 is a binding site for 5-amino-6-(D-ribitylamino)uracil. A (2S)-2-hydroxy-3-oxobutyl phosphate-binding site is contributed by Arg127.

Belongs to the DMRL synthase family.

The catalysed reaction is (2S)-2-hydroxy-3-oxobutyl phosphate + 5-amino-6-(D-ribitylamino)uracil = 6,7-dimethyl-8-(1-D-ribityl)lumazine + phosphate + 2 H2O + H(+). Its pathway is cofactor biosynthesis; riboflavin biosynthesis; riboflavin from 2-hydroxy-3-oxobutyl phosphate and 5-amino-6-(D-ribitylamino)uracil: step 1/2. Functionally, catalyzes the formation of 6,7-dimethyl-8-ribityllumazine by condensation of 5-amino-6-(D-ribitylamino)uracil with 3,4-dihydroxy-2-butanone 4-phosphate. This is the penultimate step in the biosynthesis of riboflavin. The polypeptide is 6,7-dimethyl-8-ribityllumazine synthase (Pediococcus pentosaceus (strain ATCC 25745 / CCUG 21536 / LMG 10740 / 183-1w)).